A 152-amino-acid chain; its full sequence is CASP-like protein 5B1 (152 aa).

At 1–11 (MKKMIGSPGTM) the chain is on the cytoplasmic side. A helical transmembrane segment spans residues 12–32 (SGLILRLGQCATAAASIGVMV). Residues 33 to 42 (SSYDFSNYTA) are Extracellular-facing. N-linked (GlcNAc...) asparagine glycosylation is present at Asn-39. Residues 43–63 (FCFLVASMGLQLIWSFGLACL) traverse the membrane as a helical segment. Residues 64 to 77 (DVYAIRRKSDLRSP) lie on the Cytoplasmic side of the membrane. The helical transmembrane segment at 78 to 98 (ILLSLFTVGDWVTALLALAAA) threads the bilayer. Topologically, residues 99–131 (CSSAGVTVLFTKDTEFCRQQPALSCDRFQISVG) are extracellular. A helical membrane pass occupies residues 132–152 (LSFFNWFLAAISSHTMFWILI).

It belongs to the Casparian strip membrane proteins (CASP) family. In terms of assembly, homodimer and heterodimers. In terms of tissue distribution, expressed in leaves, exclusively in hair cells (e.g. differentiated trichomes and immature cells).

Its subcellular location is the cell membrane. This chain is CASP-like protein 5B1, found in Arabidopsis thaliana (Mouse-ear cress).